Consider the following 357-residue polypeptide: Dynein axonemal assembly factor 10 (357 aa).

WD repeat units lie at residues 63–105, 115–154, 162–205, 207–249, 257–297, and 319–357; these read EKAK…MPVY, NAID…DPVA, ENKR…LRWE, NIKN…PTKG, AHKS…QRSK, and LSTQ…LNKI.

In terms of assembly, component of the PAQosome complex which is responsible for the biogenesis of several protein complexes and which consists of R2TP complex members RUVBL1, RUVBL2, RPAP3 and PIH1D1, URI complex members PFDN2, PFDN6, PDRG1, UXT and URI1 as well as ASDURF, POLR2E and DNAAF10/WDR92. Interacts with PIH1D1; the interaction associates DNAAF10 with the R2TP complex. Interacts with several dynein axonemal assembly factors. In terms of tissue distribution, widely expressed with the highest expression in testis.

The protein resides in the dynein axonemal particle. Its function is as follows. Key assembly factor specifically required for the stability of axonemal dynein heavy chains in cytoplasm. The chain is Dynein axonemal assembly factor 10 from Homo sapiens (Human).